A 641-amino-acid polypeptide reads, in one-letter code: Probable serine protease FE772_23065 (641 aa).

A helical transmembrane segment spans residues 532–552 (WVELIAILAAAGWIRVMLIGL).

It belongs to the peptidase S1 family.

The protein localises to the cell inner membrane. Possibly a dedicated protease for substrate gasdermin bGSDM; cleaves the bGSDM precursor, releasing the pore-forming moiety, which integrates into the membrane and triggers cell death. Involved in defense against bacteriophages. When this probable 4 gene operon (bGSDM-FE772_23060-FE772_23065-FE772_23070) is inserted into E.coli it provides nearly 100-fold protection against phages T5 and T6 and about 8-fold against phage T4. The operon without bGSDM no longer protects against phage. In Lysobacter enzymogenes, this protein is Probable serine protease FE772_23065.